Here is a 124-residue protein sequence, read N- to C-terminus: Small ribosomal subunit protein uS12 (124 aa).

Asp-89 is modified (3-methylthioaspartic acid). Lys-108 is modified (N6-acetyllysine).

It belongs to the universal ribosomal protein uS12 family. Part of the 30S ribosomal subunit. Contacts proteins S8 and S17. May interact with IF1 in the 30S initiation complex.

Its function is as follows. With S4 and S5 plays an important role in translational accuracy. In terms of biological role, interacts with and stabilizes bases of the 16S rRNA that are involved in tRNA selection in the A site and with the mRNA backbone. Located at the interface of the 30S and 50S subunits, it traverses the body of the 30S subunit contacting proteins on the other side and probably holding the rRNA structure together. The combined cluster of proteins S8, S12 and S17 appears to hold together the shoulder and platform of the 30S subunit. The chain is Small ribosomal subunit protein uS12 from Escherichia coli O139:H28 (strain E24377A / ETEC).